A 331-amino-acid chain; its full sequence is Cathepsin S (331 aa).

Residues 1–16 (MKRLVCVLLVCSSAVA) form the signal peptide. The propeptide at 17 to 114 (QLHKDPTLDH…ITYKSNPNRI (98 aa)) is activation peptide. A glycan (N-linked (GlcNAc...) asparagine) is linked at N104. Disulfide bonds link C126/C224, C136/C180, C170/C213, and C272/C320. C139 is a catalytic residue. Catalysis depends on residues H278 and N298.

The protein belongs to the peptidase C1 family. In terms of assembly, monomer.

The protein resides in the lysosome. It is found in the secreted. The protein localises to the cytoplasmic vesicle. It localises to the phagosome. The enzyme catalyses Similar to cathepsin L, but with much less activity on Z-Phe-Arg-|-NHMec, and more activity on the Z-Val-Val-Arg-|-Xaa compound.. Functionally, thiol protease. Key protease responsible for the removal of the invariant chain from MHC class II molecules and MHC class II antigen presentation. The bond-specificity of this proteinase is in part similar to the specificities of cathepsin L. The polypeptide is Cathepsin S (CTSS) (Homo sapiens (Human)).